A 548-amino-acid chain; its full sequence is Natural resistance-associated macrophage protein 1 (548 aa).

Residues 1-12 (MSGDTGTPNQGG) are compositionally biased toward polar residues. A disordered region spans residues 1–38 (MSGDTGTPNQGGTRYGSISSPPSPGPQQAPPGGTYLSE). Residues 1-55 (MSGDTGTPNQGGTRYGSISSPPSPGPQQAPPGGTYLSEKIPIPDTESGAFSLRKL) are Cytoplasmic-facing. The chain crosses the membrane as a helical span at residues 56 to 73 (WAFTGPGFLMSIAFLDPG). The Extracellular portion of the chain corresponds to 74–82 (NIESDLQAG). A helical transmembrane segment spans residues 83–102 (AVAGFKLLWVLLWATVLGLL). Residues 103 to 139 (CQRLAARLGVVTGKDLGEVCHLYYPKVPRTLLWLTIE) lie on the Cytoplasmic side of the membrane. A helical transmembrane segment spans residues 140 to 160 (LAIVGSDMQEVIGTAIAFSLL). The Extracellular portion of the chain corresponds to 161-164 (SAGR). The chain crosses the membrane as a helical span at residues 165–184 (IPLWGGVLITIVDTFFFLFL). Residues 185-193 (DNYGLRKLE) are Cytoplasmic-facing. A helical transmembrane segment spans residues 194–214 (AFFGFLITIMALTFGYEYVVA). The Extracellular portion of the chain corresponds to 215-237 (RPAQGALLQGLFLPSCPGCGQPE). Residues 238–256 (LLQAVGIVGAIIMPHNIYL) traverse the membrane as a helical segment. At 257–284 (HSSLVKSREVDRSRRADIREANMYFLIE) the chain is on the cytoplasmic side. A helical transmembrane segment spans residues 285 to 304 (ATIALSVSFFINLFVMAVFG). The Extracellular portion of the chain corresponds to 305–346 (QAFYKQTNQAAFNICANSSLHDYATIFPRDNLTVAVDIYQGG). 2 N-linked (GlcNAc...) asparagine glycosylation sites follow: N321 and N335. Residues 347-366 (VILGCLFGPAALYIWAVGLL) traverse the membrane as a helical segment. Topologically, residues 367-397 (AAGQSSTMTGTYAGQFVMEGFLKLRWSRFAR) are cytoplasmic. The helical transmembrane segment at 398-415 (VLLTRSCAIPPTVLLAVF) threads the bilayer. At 416-426 (RDLQDLSGLND) the chain is on the extracellular side. A helical membrane pass occupies residues 427-447 (LLNVLQSLLLPFAVLPILTFT). Topologically, residues 448–463 (SMPALMQEFANGLVSK) are cytoplasmic. Residues 464-485 (IITSSIMVLVCAVNLYFVISYV) traverse the membrane as a helical segment. At 486 to 493 (PSLPHPAY) the chain is on the extracellular side. A helical membrane pass occupies residues 494 to 513 (FSLVALLAAAYLGLTTYLVW). Residues 514–548 (TCLITQGATRLAHSSHQRFLYGLPGEDQEEGRTSG) are Cytoplasmic-facing.

It belongs to the NRAMP family.

It localises to the late endosome membrane. Its subcellular location is the lysosome membrane. It carries out the reaction Zn(2+)(in) + H(+)(out) = Zn(2+)(out) + H(+)(in). The catalysed reaction is Fe(2+)(in) + H(+)(out) = Fe(2+)(out) + H(+)(in). It catalyses the reaction Mn(2+)(in) + H(+)(out) = Mn(2+)(out) + H(+)(in). Macrophage-specific antiporter that fluxes metal ions in either direction against a proton gradient. Localized to late endosomal lysosomal membranes, delivers bivalent cations from the cytosol into these acidic compartments where they may directly affect antimicrobial activity. Involved in iron metabolism and host natural resistance to infection with intracellular parasites. Pathogen resistance involves sequestration of Fe(2+) and Mn(2+), cofactors of both prokaryotic and eukaryotic catalases and superoxide dismutases, not only to protect the macrophage against its own generation of reactive oxygen species, but to deny the cations to the pathogen for synthesis of its protective enzymes. This chain is Natural resistance-associated macrophage protein 1 (SLC11A1), found in Ovis aries (Sheep).